A 212-amino-acid chain; its full sequence is ATP phosphoribosyltransferase (212 aa).

It belongs to the ATP phosphoribosyltransferase family. Short subfamily. In terms of assembly, heteromultimer composed of HisG and HisZ subunits.

It is found in the cytoplasm. The catalysed reaction is 1-(5-phospho-beta-D-ribosyl)-ATP + diphosphate = 5-phospho-alpha-D-ribose 1-diphosphate + ATP. Its pathway is amino-acid biosynthesis; L-histidine biosynthesis; L-histidine from 5-phospho-alpha-D-ribose 1-diphosphate: step 1/9. Catalyzes the condensation of ATP and 5-phosphoribose 1-diphosphate to form N'-(5'-phosphoribosyl)-ATP (PR-ATP). Has a crucial role in the pathway because the rate of histidine biosynthesis seems to be controlled primarily by regulation of HisG enzymatic activity. The chain is ATP phosphoribosyltransferase from Prochlorococcus marinus (strain MIT 9301).